Here is a 555-residue protein sequence, read N- to C-terminus: Cilia- and flagella-associated protein 184 (555 aa).

Over residues 1-12 the composition is skewed to basic and acidic residues; the sequence is MDVSSEHTKDPG. A disordered region spans residues 1–202; that stretch reads MDVSSEHTKD…KSQEEGKRLY (202 aa). Acidic residues-rich tracts occupy residues 41-54 and 95-105; these read GELESEPEEEEEEQ and PEPEEPAEVGA. Residues 106–117 show a composition bias toward low complexity; that stretch reads EEPAQPEPGAGP. The span at 118-131 shows a compositional bias: acidic residues; it reads EELEAEAGAEELEQ. Positions 174–202 are enriched in basic and acidic residues; it reads ETQRDGAESKERDGEGRPAKSQEEGKRLY. 2 coiled-coil regions span residues 305 to 441 and 505 to 531; these read YHQE…NSVQ and DSLLRDLEEKVDKTELLHRRLESLKRH.

It belongs to the CFAP184 family. In terms of assembly, forms a complex with CFAP263; the interaction is required for functional activity in cilia.

It is found in the cell projection. It localises to the cilium. The protein localises to the cytoplasm. Its subcellular location is the cytoskeleton. The protein resides in the microtubule organizing center. It is found in the centrosome. Its function is as follows. In complex with CFAP263, acts as a regulator of ciliary beating that connects radial spoke 3 (RS3) to the inner dynein arm (IDA) and the nexin-dynein regulatory complex (N-DRC). The complex is positioned parallel to N-DRC and forms a connection between the arch at the base of RS3, the IDA tail and N-DRC. The protein is Cilia- and flagella-associated protein 184 of Homo sapiens (Human).